Reading from the N-terminus, the 198-residue chain is Recombination protein RecR (198 aa).

The C4-type zinc-finger motif lies at 56–71 (CHVCGNVDTGDPCGIC). The 96-residue stretch at 79–174 (RMLCVVEEVA…RLTQLAHGLP (96 aa)) folds into the Toprim domain.

It belongs to the RecR family.

Functionally, may play a role in DNA repair. It seems to be involved in an RecBC-independent recombinational process of DNA repair. It may act with RecF and RecO. The sequence is that of Recombination protein RecR from Rhizorhabdus wittichii (strain DSM 6014 / CCUG 31198 / JCM 15750 / NBRC 105917 / EY 4224 / RW1) (Sphingomonas wittichii).